The following is a 598-amino-acid chain: Jacalin-related lectin 17 (598 aa).

Positions 1–23 (MAQRLEAEGNKNFKGKSKWDDGS) are disordered. Jacalin-type lectin domains are found at residues 2 to 148 (AQRL…YVTW), 151 to 293 (PTKL…YFTT), 295 to 445 (PFTK…HFCP), and 452 to 595 (GEKV…HVLP).

Belongs to the jacalin lectin family.

The polypeptide is Jacalin-related lectin 17 (JAL17) (Arabidopsis thaliana (Mouse-ear cress)).